The following is a 269-amino-acid chain: Tryptophan synthase alpha chain (269 aa).

Active-site proton acceptor residues include Glu-50 and Asp-61.

The protein belongs to the TrpA family. As to quaternary structure, tetramer of two alpha and two beta chains.

It carries out the reaction (1S,2R)-1-C-(indol-3-yl)glycerol 3-phosphate + L-serine = D-glyceraldehyde 3-phosphate + L-tryptophan + H2O. Its pathway is amino-acid biosynthesis; L-tryptophan biosynthesis; L-tryptophan from chorismate: step 5/5. In terms of biological role, the alpha subunit is responsible for the aldol cleavage of indoleglycerol phosphate to indole and glyceraldehyde 3-phosphate. In Francisella tularensis subsp. tularensis (strain WY96-3418), this protein is Tryptophan synthase alpha chain.